Here is a 246-residue protein sequence, read N- to C-terminus: Ubiquinone/menaquinone biosynthesis C-methyltransferase UbiE (246 aa).

S-adenosyl-L-methionine is bound by residues threonine 75, aspartate 95, and 119–120; that span reads DA.

This sequence belongs to the class I-like SAM-binding methyltransferase superfamily. MenG/UbiE family.

The enzyme catalyses a 2-demethylmenaquinol + S-adenosyl-L-methionine = a menaquinol + S-adenosyl-L-homocysteine + H(+). It carries out the reaction a 2-methoxy-6-(all-trans-polyprenyl)benzene-1,4-diol + S-adenosyl-L-methionine = a 5-methoxy-2-methyl-3-(all-trans-polyprenyl)benzene-1,4-diol + S-adenosyl-L-homocysteine + H(+). Its pathway is quinol/quinone metabolism; menaquinone biosynthesis; menaquinol from 1,4-dihydroxy-2-naphthoate: step 2/2. It functions in the pathway cofactor biosynthesis; ubiquinone biosynthesis. In terms of biological role, methyltransferase required for the conversion of demethylmenaquinol (DMKH2) to menaquinol (MKH2) and the conversion of 2-polyprenyl-6-methoxy-1,4-benzoquinol (DDMQH2) to 2-polyprenyl-3-methyl-6-methoxy-1,4-benzoquinol (DMQH2). In Desulfotalea psychrophila (strain LSv54 / DSM 12343), this protein is Ubiquinone/menaquinone biosynthesis C-methyltransferase UbiE.